The following is a 448-amino-acid chain: tRNA modification GTPase MnmE (448 aa).

Positions 21, 80, and 119 each coordinate (6S)-5-formyl-5,6,7,8-tetrahydrofolate. Residues 215–370 (GVKLAIVGRP…LSEEILKKVG (156 aa)) form the TrmE-type G domain. Asn225 lines the K(+) pocket. GTP is bound by residues 225 to 230 (NVGKSS), 244 to 250 (TDIAGTT), and 269 to 272 (DTAG). Ser229 is a binding site for Mg(2+). Positions 244, 246, and 249 each coordinate K(+). Thr250 is a binding site for Mg(2+). Lys448 lines the (6S)-5-formyl-5,6,7,8-tetrahydrofolate pocket.

Belongs to the TRAFAC class TrmE-Era-EngA-EngB-Septin-like GTPase superfamily. TrmE GTPase family. As to quaternary structure, homodimer. Heterotetramer of two MnmE and two MnmG subunits. Requires K(+) as cofactor.

The protein resides in the cytoplasm. Exhibits a very high intrinsic GTPase hydrolysis rate. Involved in the addition of a carboxymethylaminomethyl (cmnm) group at the wobble position (U34) of certain tRNAs, forming tRNA-cmnm(5)s(2)U34. The protein is tRNA modification GTPase MnmE of Aquifex aeolicus (strain VF5).